We begin with the raw amino-acid sequence, 370 residues long: Glutamate 5-kinase (370 aa).

Lysine 12 is a binding site for ATP. Serine 52, aspartate 139, and asparagine 151 together coordinate substrate. Residues 171–172 (SD) and 213–219 (TGGMFTK) each bind ATP. The 79-residue stretch at 278-356 (QAHIAVDAGA…SDIESILGYS (79 aa)) folds into the PUA domain.

Belongs to the glutamate 5-kinase family.

Its subcellular location is the cytoplasm. The enzyme catalyses L-glutamate + ATP = L-glutamyl 5-phosphate + ADP. The protein operates within amino-acid biosynthesis; L-proline biosynthesis; L-glutamate 5-semialdehyde from L-glutamate: step 1/2. In terms of biological role, catalyzes the transfer of a phosphate group to glutamate to form L-glutamate 5-phosphate. This chain is Glutamate 5-kinase, found in Herpetosiphon aurantiacus (strain ATCC 23779 / DSM 785 / 114-95).